A 182-amino-acid polypeptide reads, in one-letter code: Orotate phosphoribosyltransferase (182 aa).

Residues Arg-93, Lys-94, Lys-97, and 119–127 contribute to the 5-phospho-alpha-D-ribose 1-diphosphate site; that span reads EDIATTGTS. Orotate-binding residues include Thr-123 and Arg-151.

This sequence belongs to the purine/pyrimidine phosphoribosyltransferase family. PyrE subfamily. In terms of assembly, homodimer. Mg(2+) is required as a cofactor.

It carries out the reaction orotidine 5'-phosphate + diphosphate = orotate + 5-phospho-alpha-D-ribose 1-diphosphate. The protein operates within pyrimidine metabolism; UMP biosynthesis via de novo pathway; UMP from orotate: step 1/2. In terms of biological role, catalyzes the transfer of a ribosyl phosphate group from 5-phosphoribose 1-diphosphate to orotate, leading to the formation of orotidine monophosphate (OMP). The polypeptide is Orotate phosphoribosyltransferase (Haloquadratum walsbyi (strain DSM 16790 / HBSQ001)).